Reading from the N-terminus, the 119-residue chain is Large ribosomal subunit protein bL20 (119 aa).

Belongs to the bacterial ribosomal protein bL20 family.

Functionally, binds directly to 23S ribosomal RNA and is necessary for the in vitro assembly process of the 50S ribosomal subunit. It is not involved in the protein synthesizing functions of that subunit. The protein is Large ribosomal subunit protein bL20 of Metamycoplasma arthritidis (strain 158L3-1) (Mycoplasma arthritidis).